We begin with the raw amino-acid sequence, 216 residues long: 2-hydroxy-3-keto-5-methylthiopentenyl-1-phosphate phosphatase (216 aa).

It belongs to the HAD-like hydrolase superfamily. MtnX family.

It carries out the reaction 2-hydroxy-5-methylsulfanyl-3-oxopent-1-enyl phosphate + H2O = 1,2-dihydroxy-5-(methylsulfanyl)pent-1-en-3-one + phosphate. Its pathway is amino-acid biosynthesis; L-methionine biosynthesis via salvage pathway; L-methionine from S-methyl-5-thio-alpha-D-ribose 1-phosphate: step 4/6. In terms of biological role, dephosphorylates 2-hydroxy-3-keto-5-methylthiopentenyl-1-phosphate (HK-MTPenyl-1-P) yielding 1,2-dihydroxy-3-keto-5-methylthiopentene (DHK-MTPene). In Exiguobacterium sp. (strain ATCC BAA-1283 / AT1b), this protein is 2-hydroxy-3-keto-5-methylthiopentenyl-1-phosphate phosphatase.